The chain runs to 289 residues: Phosphatidylserine decarboxylase proenzyme (289 aa).

Active-site charge relay system; for autoendoproteolytic cleavage activity residues include D92, H149, and S254. The active-site Schiff-base intermediate with substrate; via pyruvic acid; for decarboxylase activity is the S254. Position 254 is a pyruvic acid (Ser); by autocatalysis (S254).

Belongs to the phosphatidylserine decarboxylase family. PSD-B subfamily. Prokaryotic type I sub-subfamily. As to quaternary structure, heterodimer of a large membrane-associated beta subunit and a small pyruvoyl-containing alpha subunit. Requires pyruvate as cofactor. In terms of processing, is synthesized initially as an inactive proenzyme. Formation of the active enzyme involves a self-maturation process in which the active site pyruvoyl group is generated from an internal serine residue via an autocatalytic post-translational modification. Two non-identical subunits are generated from the proenzyme in this reaction, and the pyruvate is formed at the N-terminus of the alpha chain, which is derived from the carboxyl end of the proenzyme. The autoendoproteolytic cleavage occurs by a canonical serine protease mechanism, in which the side chain hydroxyl group of the serine supplies its oxygen atom to form the C-terminus of the beta chain, while the remainder of the serine residue undergoes an oxidative deamination to produce ammonia and the pyruvoyl prosthetic group on the alpha chain. During this reaction, the Ser that is part of the protease active site of the proenzyme becomes the pyruvoyl prosthetic group, which constitutes an essential element of the active site of the mature decarboxylase.

It is found in the cell membrane. The enzyme catalyses a 1,2-diacyl-sn-glycero-3-phospho-L-serine + H(+) = a 1,2-diacyl-sn-glycero-3-phosphoethanolamine + CO2. Its pathway is phospholipid metabolism; phosphatidylethanolamine biosynthesis; phosphatidylethanolamine from CDP-diacylglycerol: step 2/2. Catalyzes the formation of phosphatidylethanolamine (PtdEtn) from phosphatidylserine (PtdSer). The protein is Phosphatidylserine decarboxylase proenzyme of Pseudomonas paraeruginosa (strain DSM 24068 / PA7) (Pseudomonas aeruginosa (strain PA7)).